A 225-amino-acid polypeptide reads, in one-letter code: MRSRFENERRRVIDYLRRIGIIRSDKVYRALLSVPREEFVPPQYREYAYIDEPLPIGFGQTISAIHMVAIMTEELDPEPGNIVLEIGTGSGYQAAVLAEIVAKQDPNRRGHVYTVERIPELAEFAKKNLERTGYIEYVTVIVGDGTKGYPEKAPYDRIIVTAAAPEVPKPLLKQLRVGGKLVIPVGDRFVQRLLSVKRVGEHEYVTKHGIECMFVPLIGEYGWKD.

The active site involves S63.

This sequence belongs to the methyltransferase superfamily. L-isoaspartyl/D-aspartyl protein methyltransferase family.

It localises to the cytoplasm. It catalyses the reaction [protein]-L-isoaspartate + S-adenosyl-L-methionine = [protein]-L-isoaspartate alpha-methyl ester + S-adenosyl-L-homocysteine. Catalyzes the methyl esterification of L-isoaspartyl residues in peptides and proteins that result from spontaneous decomposition of normal L-aspartyl and L-asparaginyl residues. It plays a role in the repair and/or degradation of damaged proteins. The protein is Protein-L-isoaspartate O-methyltransferase of Staphylothermus marinus (strain ATCC 43588 / DSM 3639 / JCM 9404 / F1).